The sequence spans 81 residues: 2,3-bisphosphoglycerate-independent phosphoglycerate mutase (81 aa).

The active-site Phosphoserine intermediate is the S14. S14 serves as a coordination point for Mn(2+). H75 lines the substrate pocket.

This sequence belongs to the BPG-independent phosphoglycerate mutase family. Monomer. Mn(2+) serves as cofactor.

It carries out the reaction (2R)-2-phosphoglycerate = (2R)-3-phosphoglycerate. The protein operates within carbohydrate degradation; glycolysis; pyruvate from D-glyceraldehyde 3-phosphate: step 3/5. Catalyzes the interconversion of 2-phosphoglycerate and 3-phosphoglycerate. The protein is 2,3-bisphosphoglycerate-independent phosphoglycerate mutase (gpmI) of Tomato big bud phytoplasma.